Here is an 888-residue protein sequence, read N- to C-terminus: MNSVNNIRSTFLDYFHRNGHQVLSSSPLVPRNDPTLMFTNAGMVQFKNVFTGLEQHLYKKATTAQKCVRAGGKHNDLDNVGYTARHHTFFEMLGNFSFGDYFKEEAIFLSWDLLTKEFCLPKDKLLVTVYQSDDVAAELWRKISGLPDEKIVRIATADNFWAMGDTGPCGPCSEIFYDHGDEIWGGPPGSMEEDGDRFIEIWNLVFMQYEQLSKEERVDLPHPSIDTGMGLERIAAVLQGVHDNYDIDLFRVLIGASEKITGIKATGDFVASHRVIADHLRSSAFLIADGVLPSNEGRGYVLRRIMRRAMRHAHLLGAKEPLMWQLLPALICEMGQAYPELVRAESLISETLKLEEIRFRKTLERGLGLLNEESAKLKEGDHLNGEVAFKLYDTYGFPLDLTQDVLRRRGISVDVDAFDKAMERQKEEARAHWSGSGEAVTETIWFSVRDQVGVTEFLGYETEKAEGIITALVCDGKIVDEVSSGQKAILVLNQTPFYGESGGQIGDSGIISGEDFIFEVHDTQKKADGVFIHLGKVKSGHAKISDCVQLTVDVVRRKKIRANHSATHLLHEALRQVLGSHVTQKGSLVSPERLRFDFSHPKSVSLEELKKIEDLANEIVLQNNKVTTRLMAVDEAISEGAMALFGEKYEDEVRVVSMGAPLEQGGLKKHWSIELCGGTHVERTGDIGLIHIVSESSVSAGVRRIEALTGAAARLYLCRQDVRIREISDLLKTSSSDLEERVRSLLDERRKFEKELNDVRKKMVLNGKITESGQGDITIINGLSFMRHIVKNILPRDLKALVDAGKKQIGSGVVAFITISEDGKGSAVVGVTDDLTDKLNAVDLVRILSNVLGGQGGGGRSDMAQAGGPDGNKANEAFAALKDFLEKT.

Residues His564, His568, Cys676, and His680 each contribute to the Zn(2+) site.

The protein belongs to the class-II aminoacyl-tRNA synthetase family. Zn(2+) serves as cofactor.

The protein localises to the cytoplasm. The enzyme catalyses tRNA(Ala) + L-alanine + ATP = L-alanyl-tRNA(Ala) + AMP + diphosphate. Catalyzes the attachment of alanine to tRNA(Ala) in a two-step reaction: alanine is first activated by ATP to form Ala-AMP and then transferred to the acceptor end of tRNA(Ala). Also edits incorrectly charged Ser-tRNA(Ala) and Gly-tRNA(Ala) via its editing domain. The protein is Alanine--tRNA ligase of Bartonella tribocorum (strain CIP 105476 / IBS 506).